We begin with the raw amino-acid sequence, 272 residues long: Proteasome subunit beta type-5 (272 aa).

A propeptide spans 1–55 (removed in mature form); the sequence is MKLDTSGLESTAPIFRRSDFVFDGLQMTPSFDLPNPTDFDGFQKEAVQMVKPAKG. T56 (nucleophile) is an active-site residue.

This sequence belongs to the peptidase T1B family. The 26S proteasome consists of a 20S proteasome core and two 19S regulatory subunits. The 20S proteasome core is composed of 28 subunits that are arranged in four stacked rings, resulting in a barrel-shaped structure. The two end rings are each formed by seven alpha subunits, and the two central rings are each formed by seven beta subunits. The catalytic chamber with the active sites is on the inside of the barrel.

Its subcellular location is the cytoplasm. The protein localises to the nucleus. It catalyses the reaction Cleavage of peptide bonds with very broad specificity.. Its function is as follows. The proteasome is a multicatalytic proteinase complex which is characterized by its ability to cleave peptides with Arg, Phe, Tyr, Leu, and Glu adjacent to the leaving group at neutral or slightly basic pH. The proteasome has an ATP-dependent proteolytic activity. The sequence is that of Proteasome subunit beta type-5 from Spinacia oleracea (Spinach).